Consider the following 181-residue polypeptide: Acetolactate synthase small subunit (181 aa).

Positions 4-78 constitute an ACT domain; sequence TLSVLVEDES…NVLKIQDITN (75 aa).

Belongs to the acetolactate synthase small subunit family. Dimer of large and small chains.

It is found in the plastid. The protein resides in the chloroplast. The catalysed reaction is 2 pyruvate + H(+) = (2S)-2-acetolactate + CO2. It functions in the pathway amino-acid biosynthesis; L-isoleucine biosynthesis; L-isoleucine from 2-oxobutanoate: step 1/4. Its pathway is amino-acid biosynthesis; L-valine biosynthesis; L-valine from pyruvate: step 1/4. In Galdieria sulphuraria (Red alga), this protein is Acetolactate synthase small subunit (ilvH).